We begin with the raw amino-acid sequence, 745 residues long: GTPase-activating protein GYP7 (745 aa).

The region spanning Leu-391–Phe-623 is the Rab-GAP TBC domain.

Functionally, most effectively accelerate the intrinsic GTPase activity of YPT7. It is also active, but to a lesser extent, on YPT31, YPT32 and YPT1. YPT6 and SEC4. This is GTPase-activating protein GYP7 (GYP7) from Candida glabrata (strain ATCC 2001 / BCRC 20586 / JCM 3761 / NBRC 0622 / NRRL Y-65 / CBS 138) (Yeast).